A 246-amino-acid chain; its full sequence is Uridylate kinase (246 aa).

16–19 (KFSG) contacts ATP. Position 58 (Gly-58) interacts with UMP. Gly-59 and Arg-63 together coordinate ATP. UMP is bound by residues Asp-78 and 139 to 146 (TGNPFFTT). ATP contacts are provided by Thr-166, Tyr-172, and Asp-175.

This sequence belongs to the UMP kinase family. In terms of assembly, homohexamer.

It localises to the cytoplasm. The enzyme catalyses UMP + ATP = UDP + ADP. It participates in pyrimidine metabolism; CTP biosynthesis via de novo pathway; UDP from UMP (UMPK route): step 1/1. With respect to regulation, inhibited by UTP. Catalyzes the reversible phosphorylation of UMP to UDP. This Legionella pneumophila (strain Corby) protein is Uridylate kinase.